Consider the following 108-residue polypeptide: UPF0060 membrane protein YnfA (108 aa).

The Periplasmic portion of the chain corresponds to 1–5; the sequence is MIKTT. Residues 6–26 traverse the membrane as a helical segment; it reads LLFFATALCEIIGCFLPWLWL. The Cytoplasmic segment spans residues 27–30; that stretch reads KRNA. A helical membrane pass occupies residues 31–51; it reads SIWLLLPAGISLALFVWLLTL. Over 52-60 the chain is Periplasmic; the sequence is HPAASGRIY. Residues 61–81 traverse the membrane as a helical segment; that stretch reads AAYGGVYVCTALMWLRVVDGV. Topologically, residues 82-84 are cytoplasmic; sequence KLT. A helical membrane pass occupies residues 85-105; the sequence is LYDWTGALIALCGMLIIVAGW. Residues 106 to 108 lie on the Periplasmic side of the membrane; the sequence is GRT.

This sequence belongs to the UPF0060 family.

The protein localises to the cell inner membrane. This chain is UPF0060 membrane protein YnfA, found in Shigella dysenteriae serotype 1 (strain Sd197).